Consider the following 242-residue polypeptide: Peroxisomal membrane protein 11-3 (242 aa).

The interval 1–22 is disordered; the sequence is MAAAAAAAGSSDSRKPAAHPPP. Residues 1 to 102 are Cytoplasmic-facing; it reads MAAAAAAAGS…LRAHPHPPPA (102 aa). The helical transmembrane segment at 103–123 threads the bilayer; the sequence is VALLAYGGEGVYYFLEQFVWL. Over 124 to 214 the chain is Lumenal; that stretch reads AKAGLLPAHL…MALGDVTDGK (91 aa). The chain crosses the membrane as a helical span at residues 215–235; the sequence is GLLGSSTLMASAGLLSALISA. The Cytoplasmic segment spans residues 236 to 242; the sequence is HKNWNSC.

Belongs to the peroxin-11 family. Expressed in seedlings, roots, leaf sheaths, spikelets and endosperm.

It is found in the peroxisome membrane. Functionally, involved in peroxisomal proliferation. The polypeptide is Peroxisomal membrane protein 11-3 (PEX11-3) (Oryza sativa subsp. japonica (Rice)).